Consider the following 216-residue polypeptide: MRVILLGAPGAGKGTQAKFITEKFGIPQISTGDMLRAAVKAGTPLGLELKKVMDAGQLVSDELIISLVKERIAQPDCANGCLFDGFPRTIPQAEAMVAAGVDIDAVVEIAVDDEEIVGRMAGRRVHLASGRTYHIQYNPPKVEGKDDVTGEDLIQRDDDKEETVRHRLSVYHTQTKPLVDFYQKLSAANAGKPKYSHIEGVGSVDAITAKVLAALS.

10–15 (GAGKGT) provides a ligand contact to ATP. Residues 30-59 (STGDMLRAAVKAGTPLGLELKKVMDAGQLV) form an NMP region. AMP is bound by residues Thr31, Arg36, 57-59 (QLV), 85-88 (GFPR), and Gln92. Positions 122 to 159 (GRRVHLASGRTYHIQYNPPKVEGKDDVTGEDLIQRDDD) are LID. Residues Arg123 and 132-133 (TY) contribute to the ATP site. AMP-binding residues include Arg156 and Arg167. Gly202 lines the ATP pocket.

It belongs to the adenylate kinase family. In terms of assembly, monomer.

The protein localises to the cytoplasm. The enzyme catalyses AMP + ATP = 2 ADP. Its pathway is purine metabolism; AMP biosynthesis via salvage pathway; AMP from ADP: step 1/1. Catalyzes the reversible transfer of the terminal phosphate group between ATP and AMP. Plays an important role in cellular energy homeostasis and in adenine nucleotide metabolism. This chain is Adenylate kinase, found in Pseudomonas putida (strain GB-1).